The chain runs to 1755 residues: MESQQLSQHSHISHGSACASVTSKEVHTNQDPLDVSASKTEECEKASTKANSQQTTTPASSAVPENPHHASPQPASVPPPQNGPYPQQCMMTQNQANPSGWSFYGHPSMIPYTPYQMSPMYFPPGPQSQFPQYPSSVGTPLSTPSPESGNTFTDSSSADSDMTSTKKYVRPPPMLTSPNDFPNWVKTYIKFLQNSNLGGIIPTVNGKPVRQITDDELTFLYNTFQIFAPSQFLPTWVKDILSVDYTDIMKILSKSIEKMQSDTQEANDIVTLANLQYNGSTPADAFETKVTNIIDRLNNNGIHINNKVACQLIMRGLSGEYKFLRYTRHRHLNMTVAELFLDIHAIYEEQQGSRNSKPNYRRNLSDEKNDSRSYTNTTKPKVIARNPQKTNNSKSKTARAHNVSTSNNSPSTDNDSISKSTTEPIQLNNKHDLHLGQELTESTVNHTNHSDDELPGHLLLDSGASRTLIRSAHHIHSASSNPDINVVDAQKRNIPINAIGDLQFHFQDNTKTSIKVLHTPNIAYDLLSLNELAAVDITACFTKNVLERSDGTVLAPIVQYGDFYWVSKRYLLPSNISVPTINNVHTSESTRKYPYPFIHRMLAHANAQTIRYSLKNNTITYFNESDVDWSSAIDYQCPDCLIGKSTKHRHIKGSRLKYQNSYEPFQYLHTDIFGPVHNLPKSAPSYFISFTDETTKFRWVYPLHDRREDSILDVFTTILAFIKNQFQASVLVIQMDRGSEYTNRTLHKFLEKNGITPCYTTTADSRAHGVAERLNRTLLDDCRTQLQCSGLPNHLWFSAIEFSTIVRNSLASPKSKKSARQHAGLAGLDISTLLPFGQPVIVNDHNPNSKIHPRGIPGYALHPSRNSYGYIIYLPSLKKTVDTTNYVILQGKESRLDQFNYDALTFDEDLNRLTASYQSFIASNEIQESNDLNIESDHDFQSDIELHPEQPRNVLSKAVSPTDSTPPSTHTEDSKRVSKTNIRAPREVDPNISESNILPSKKRSSTPQISNIESTGSGGMHKLNVPLLAPMSQSNTHESSHASKSKDFRHSDSYSENETNHTNVPISSTGGTNNKTVPQISDQETEKRIIHRSPSIDASPPENNSSHNIVPIKTPTTVSEQNTEESIIADLPLPDLPPESPTEFPDPFKELPPINSHQTNSSLGGIGDSNAYTTINSKKRSLEDNETEIKVSRDTWNTKNMRSLEPPRSKKRIHLIAAVKAVKSIKPIRTTLRYDEAITYNKDIKEKEKYIEAYHKEVNQLLKMKTWDTDEYYDRKEIDPKRVINSMFIFNKKRDGTHKARFVARGDIQHPDTYDTGMQSNTVHHYALMTSLSLALDNNYYITQLDISSAYLYADIKEELYIRPPPHLGMNDKLIRLKKSHYGLKQSGANWYETIKSYLIKQCGMEEVRGWSCVFKNSQVTICLFVDDMILFSKDLNANKKIITTLKKQYDTKIINLGESDNEIQYDILGLEIKYQRGKYMKLGMENSLTEKIPKLNVPLNPKGRKLSAPGQPGLYIDQDELEIDEDEYKEKVHEMQKLIGLASYVGYKFRFDLLYYINTLAQHILFPSRQVLDMTYELIQFMWDTRDKQLIWHKNKPTEPDNKLVAISDASYGNQPYYKSQIGNIFLLNGKVIGGKSTKASLTCTSTTEAEIHAISESVPLLNNLSYLIQELNKKPIIKGLLTDSRSTISIIKSTNEEKFRNRFFGTKAMRLRDEVSGNNLYVYYIETKKNIADVMTKPLPIKTFKLLTNKWIH.

Positions 1 to 16 (MESQQLSQHSHISHGS) are enriched in low complexity. 3 disordered regions span residues 1-93 (MESQ…MMTQ), 126-173 (PQSQ…RPPP), and 352-421 (GSRN…SKST). Composition is skewed to polar residues over residues 48-60 (TKAN…TPAS) and 127-152 (QSQF…GNTF). Low complexity predominate over residues 153-165 (TDSSSADSDMTST). An RNA-binding region spans residues 299-401 (NNGIHINNKV…NSKSKTARAH (103 aa)). The segment covering 402–418 (NVSTSNNSPSTDNDSIS) has biased composition (low complexity). The residue at position 416 (serine 416) is a Phosphoserine. The active-site For protease activity; shared with dimeric partner is aspartate 461. Residues 583 to 640 (NVHTSESTRKYPYPFIHRMLAHANAQTIRYSLKNNTITYFNESDVDWSSAIDYQCPDC) form an integrase-type zinc finger-like region. Positions 660-835 (NSYEPFQYLH…AGLDISTLLP (176 aa)) constitute an Integrase catalytic domain. Positions 671 and 736 each coordinate Mg(2+). Disordered regions lie at residues 956–1087 (SKAV…ETEK), 1092–1111 (RSPS…NIVP), and 1130–1186 (DLPL…EDNE). Residues 960–969 (SPTDSTPPST) are compositionally biased toward low complexity. The span at 1005–1015 (STPQISNIEST) shows a compositional bias: polar residues. Residues 1038–1053 (ESSHASKSKDFRHSDS) show a composition bias toward basic and acidic residues. 2 stretches are compositionally biased toward polar residues: residues 1054–1082 (YSEN…QISD) and 1101–1111 (PENNSSHNIVP). The Bipartite nuclear localization signal signature appears at 1178–1212 (KKRSLEDNETEIKVSRDTWNTKNMRSLEPPRSKKR). Positions 1338-1476 (NNYYITQLDI…DILGLEIKYQ (139 aa)) constitute a Reverse transcriptase Ty1/copia-type domain. The Mg(2+) site is built by aspartate 1346, aspartate 1427, aspartate 1428, aspartate 1610, glutamate 1652, and aspartate 1685. Residues 1610–1752 (DASYGNQPYY…IKTFKLLTNK (143 aa)) enclose the RNase H Ty1/copia-type domain.

As to quaternary structure, the capsid protein forms a homotrimer, from which the VLPs are assembled. The protease is a homodimer, whose active site consists of two apposed aspartic acid residues. Post-translationally, initially, virus-like particles (VLPs) are composed of the structural unprocessed proteins Gag and Gag-Pol, and also contain the host initiator methionine tRNA (tRNA(i)-Met) which serves as a primer for minus-strand DNA synthesis, and a dimer of genomic Ty RNA. Processing of the polyproteins occurs within the particle and proceeds by an ordered pathway, called maturation. First, the protease (PR) is released by autocatalytic cleavage of the Gag-Pol polyprotein yielding capsid protein p45 and a Pol-p154 precursor protein. This cleavage is a prerequisite for subsequent processing of Pol-p154 at the remaining sites to release the mature structural and catalytic proteins. Maturation takes place prior to the RT reaction and is required to produce transposition-competent VLPs.

It is found in the cytoplasm. The protein localises to the nucleus. The catalysed reaction is DNA(n) + a 2'-deoxyribonucleoside 5'-triphosphate = DNA(n+1) + diphosphate. It catalyses the reaction Endonucleolytic cleavage to 5'-phosphomonoester.. Capsid protein (CA) is the structural component of the virus-like particle (VLP), forming the shell that encapsulates the retrotransposons dimeric RNA genome. The particles are assembled from trimer-clustered units and there are holes in the capsid shells that allow for the diffusion of macromolecules. CA also has nucleocapsid-like chaperone activity, promoting primer tRNA(i)-Met annealing to the multipartite primer-binding site (PBS), dimerization of Ty1 RNA and initiation of reverse transcription. Its function is as follows. The aspartyl protease (PR) mediates the proteolytic cleavages of the Gag and Gag-Pol polyproteins after assembly of the VLP. Functionally, reverse transcriptase/ribonuclease H (RT) is a multifunctional enzyme that catalyzes the conversion of the retro-elements RNA genome into dsDNA within the VLP. The enzyme displays a DNA polymerase activity that can copy either DNA or RNA templates, and a ribonuclease H (RNase H) activity that cleaves the RNA strand of RNA-DNA heteroduplexes during plus-strand synthesis and hydrolyzes RNA primers. The conversion leads to a linear dsDNA copy of the retrotransposon that includes long terminal repeats (LTRs) at both ends. In terms of biological role, integrase (IN) targets the VLP to the nucleus, where a subparticle preintegration complex (PIC) containing at least integrase and the newly synthesized dsDNA copy of the retrotransposon must transit the nuclear membrane. Once in the nucleus, integrase performs the integration of the dsDNA into the host genome. The chain is Transposon Ty1-JR1 Gag-Pol polyprotein (TY1B-JR1) from Saccharomyces cerevisiae (strain ATCC 204508 / S288c) (Baker's yeast).